The following is a 337-amino-acid chain: MENLVALTQEALKLVADAGDLNALEAVRVDYLGKKGHITALMKNLGGLSPEERPAAGAEINKAKDAVQEALNTRKQLLEQAAINAKLASEVVDVSLPGRGLHTGGLHPVTRTLQRIEEIFAAVGYSVEEGPEIEDDYHNFEALNIPSHHPARAMHDTFYVDDTHVLRTHTSPVQVRTMENKKPPIRVICPGRVYRCDSDMTHSPMFHQVEGLVVDKNISFADLKGTMDQFLKAFFEADVPVRFRPSYFPFTEPSAEMDIQCTQCRGKGCRVCKSTGWLEVGGCGMVHPEVFNASGVDPETYTGFAFGMGVERLAMLRYGVNDLRLFFENDLRFLKQF.

Glutamate 252 contributes to the Mg(2+) binding site.

Belongs to the class-II aminoacyl-tRNA synthetase family. Phe-tRNA synthetase alpha subunit type 1 subfamily. As to quaternary structure, tetramer of two alpha and two beta subunits. Mg(2+) is required as a cofactor.

The protein localises to the cytoplasm. The catalysed reaction is tRNA(Phe) + L-phenylalanine + ATP = L-phenylalanyl-tRNA(Phe) + AMP + diphosphate + H(+). This chain is Phenylalanine--tRNA ligase alpha subunit, found in Cellvibrio japonicus (strain Ueda107) (Pseudomonas fluorescens subsp. cellulosa).